Reading from the N-terminus, the 356-residue chain is Inositol phosphoceramide mannosyltransferase 3 (356 aa).

The helical transmembrane segment at 4–24 (ILFYFFFFLTLILSATVYLFG) threads the bilayer. N-linked (GlcNAc...) asparagine glycans are attached at residues asparagine 52 and asparagine 146. The next 2 membrane-spanning stretches (helical) occupy residues 197 to 217 (FPYLTVMYSTGPLFLSIIWSA) and 269 to 289 (WAIFTFLGFLTFFIVVYFIFG). Serine 307, serine 353, and serine 355 each carry phosphoserine.

The protein belongs to the glycosyltransferase 32 family.

It is found in the endoplasmic reticulum membrane. The protein resides in the golgi apparatus. Its subcellular location is the cis-Golgi network membrane. The protein localises to the trans-Golgi network membrane. In terms of biological role, with imt1 and imt2, is required for the synthesis of mannosylinositol phosphoceramide (MIPC). Catalyzes the addition of mannosyl to inositol phosphoceramide (IPC). MIPC is essential for cell morphology, cell-surface distribution of ergosterol, localization for plasma-membrane transporters, and lipid-raft-mediated endocytosis of plasma membrane proteins to the vacuole. The polypeptide is Inositol phosphoceramide mannosyltransferase 3 (Schizosaccharomyces pombe (strain 972 / ATCC 24843) (Fission yeast)).